We begin with the raw amino-acid sequence, 406 residues long: Probable tRNA sulfurtransferase (406 aa).

A THUMP domain is found at 60-166 (DQVMNRLKLV…LNGIFLSSET (107 aa)). ATP is bound by residues 184–185 (MM), 209–210 (HF), R266, G288, and Q297.

It belongs to the ThiI family.

It is found in the cytoplasm. It carries out the reaction [ThiI sulfur-carrier protein]-S-sulfanyl-L-cysteine + a uridine in tRNA + 2 reduced [2Fe-2S]-[ferredoxin] + ATP + H(+) = [ThiI sulfur-carrier protein]-L-cysteine + a 4-thiouridine in tRNA + 2 oxidized [2Fe-2S]-[ferredoxin] + AMP + diphosphate. It catalyses the reaction [ThiS sulfur-carrier protein]-C-terminal Gly-Gly-AMP + S-sulfanyl-L-cysteinyl-[cysteine desulfurase] + AH2 = [ThiS sulfur-carrier protein]-C-terminal-Gly-aminoethanethioate + L-cysteinyl-[cysteine desulfurase] + A + AMP + 2 H(+). It functions in the pathway cofactor biosynthesis; thiamine diphosphate biosynthesis. Catalyzes the ATP-dependent transfer of a sulfur to tRNA to produce 4-thiouridine in position 8 of tRNAs, which functions as a near-UV photosensor. Also catalyzes the transfer of sulfur to the sulfur carrier protein ThiS, forming ThiS-thiocarboxylate. This is a step in the synthesis of thiazole, in the thiamine biosynthesis pathway. The sulfur is donated as persulfide by IscS. This chain is Probable tRNA sulfurtransferase, found in Limosilactobacillus reuteri subsp. reuteri (strain JCM 1112) (Lactobacillus reuteri).